A 662-amino-acid polypeptide reads, in one-letter code: DNA topoisomerase 4 subunit B (662 aa).

Residues Tyr-20, Asn-60, Asp-87, 129-135, and Lys-359 contribute to the ATP site; that span reads GLHGVGI. Residues 439–553 form the Toprim domain; sequence TELFIVEGDS…EGHLYLAKPP (115 aa). Glu-445, Asp-518, and Asp-520 together coordinate Mg(2+).

It belongs to the type II topoisomerase family. ParE type 1 subfamily. Heterotetramer composed of ParC and ParE. Mg(2+) serves as cofactor. Mn(2+) is required as a cofactor. It depends on Ca(2+) as a cofactor.

It carries out the reaction ATP-dependent breakage, passage and rejoining of double-stranded DNA.. In terms of biological role, topoisomerase IV is essential for chromosome segregation. It relaxes supercoiled DNA. Performs the decatenation events required during the replication of a circular DNA molecule. In Rickettsia felis (strain ATCC VR-1525 / URRWXCal2) (Rickettsia azadi), this protein is DNA topoisomerase 4 subunit B.